A 267-amino-acid chain; its full sequence is Ribosomal RNA small subunit methyltransferase A (267 aa).

S-adenosyl-L-methionine is bound by residues Leu-20, Gly-45, Glu-68, Asp-91, and Asn-113.

This sequence belongs to the class I-like SAM-binding methyltransferase superfamily. rRNA adenine N(6)-methyltransferase family. RsmA subfamily.

The protein localises to the cytoplasm. The catalysed reaction is adenosine(1518)/adenosine(1519) in 16S rRNA + 4 S-adenosyl-L-methionine = N(6)-dimethyladenosine(1518)/N(6)-dimethyladenosine(1519) in 16S rRNA + 4 S-adenosyl-L-homocysteine + 4 H(+). In terms of biological role, specifically dimethylates two adjacent adenosines (A1518 and A1519) in the loop of a conserved hairpin near the 3'-end of 16S rRNA in the 30S particle. May play a critical role in biogenesis of 30S subunits. The chain is Ribosomal RNA small subunit methyltransferase A from Blochmanniella pennsylvanica (strain BPEN).